A 301-amino-acid chain; its full sequence is Pantothenate synthetase (301 aa).

30 to 37 (MGNLHEGH) provides a ligand contact to ATP. Histidine 37 acts as the Proton donor in catalysis. Residue glutamine 61 participates in (R)-pantoate binding. A beta-alanine-binding site is contributed by glutamine 61. 149 to 152 (GEKD) contributes to the ATP binding site. Glutamine 155 lines the (R)-pantoate pocket. ATP-binding positions include valine 178 and 186–189 (MSSR).

The protein belongs to the pantothenate synthetase family. Homodimer.

It is found in the cytoplasm. The enzyme catalyses (R)-pantoate + beta-alanine + ATP = (R)-pantothenate + AMP + diphosphate + H(+). It functions in the pathway cofactor biosynthesis; (R)-pantothenate biosynthesis; (R)-pantothenate from (R)-pantoate and beta-alanine: step 1/1. Catalyzes the condensation of pantoate with beta-alanine in an ATP-dependent reaction via a pantoyl-adenylate intermediate. In Vibrio vulnificus (strain CMCP6), this protein is Pantothenate synthetase.